A 905-amino-acid chain; its full sequence is NADH-quinone oxidoreductase subunit G (905 aa).

The region spanning 1–83 is the 2Fe-2S ferredoxin-type domain; sequence MATIHVDGKT…NTWISIEDEE (83 aa). [2Fe-2S] cluster contacts are provided by cysteine 34, cysteine 45, cysteine 48, and cysteine 67. One can recognise a 4Fe-4S His(Cys)3-ligated-type domain in the interval 83-122; that stretch reads EAKQFRASVVEWLMTNHPHDCPVCEEGGHCHLQDMTVMTG. 12 residues coordinate [4Fe-4S] cluster: histidine 99, cysteine 103, cysteine 106, cysteine 112, cysteine 151, cysteine 154, cysteine 157, cysteine 201, cysteine 228, cysteine 231, cysteine 235, and cysteine 263. A 4Fe-4S Mo/W bis-MGD-type domain is found at 221–277; that stretch reads MQFAPSICHGCSSGCNISPGERYGEIRRIENRYNGSVNHYFLCDRGRFGYGYVNRED.

Belongs to the complex I 75 kDa subunit family. In terms of assembly, composed of 13 different subunits. Subunits NuoCD, E, F, and G constitute the peripheral sector of the complex. [2Fe-2S] cluster serves as cofactor. The cofactor is [4Fe-4S] cluster.

It catalyses the reaction a quinone + NADH + 5 H(+)(in) = a quinol + NAD(+) + 4 H(+)(out). Its function is as follows. NDH-1 shuttles electrons from NADH, via FMN and iron-sulfur (Fe-S) centers, to quinones in the respiratory chain. The immediate electron acceptor for the enzyme in this species is believed to be ubiquinone. Couples the redox reaction to proton translocation (for every two electrons transferred, four hydrogen ions are translocated across the cytoplasmic membrane), and thus conserves the redox energy in a proton gradient. This Pseudomonas aeruginosa (strain ATCC 15692 / DSM 22644 / CIP 104116 / JCM 14847 / LMG 12228 / 1C / PRS 101 / PAO1) protein is NADH-quinone oxidoreductase subunit G (nuoG).